We begin with the raw amino-acid sequence, 59 residues long: UPF0181 protein YoaH (59 aa).

This sequence belongs to the UPF0181 family.

This chain is UPF0181 protein YoaH, found in Salmonella arizonae (strain ATCC BAA-731 / CDC346-86 / RSK2980).